We begin with the raw amino-acid sequence, 281 residues long: HTH-type transcriptional activator RamA (281 aa).

Residues 213-278 (RIKQTTKLSA…EAVNAARRIG (66 aa)) form the HTH luxR-type domain.

In terms of biological role, ramA is a master regulator of acetate metabolism. It positively controls the expression of acnA, aceA, aceB, ack, pta and ramB genes in the presence of acetate. RamA is also a positive regulator of rpf2 gene expression during growth on glucose as the sole carbon source. In Corynebacterium glutamicum (strain ATCC 13032 / DSM 20300 / JCM 1318 / BCRC 11384 / CCUG 27702 / LMG 3730 / NBRC 12168 / NCIMB 10025 / NRRL B-2784 / 534), this protein is HTH-type transcriptional activator RamA.